The sequence spans 287 residues: Sulfofructosephosphate aldolase (287 aa).

Residue D82 is the Proton donor of the active site. The Zn(2+) site is built by H83 and H180. G181 lines the dihydroxyacetone phosphate pocket. Zn(2+) is bound at residue H208. Dihydroxyacetone phosphate is bound by residues 209–211 (GGS) and 230–233 (NVDT).

Belongs to the class II fructose-bisphosphate aldolase family. Requires Zn(2+) as cofactor.

The enzyme catalyses 6-deoxy-6-sulfo-D-fructose 1-phosphate = (2S)-3-sulfolactaldehyde + dihydroxyacetone phosphate. In terms of biological role, part of the sulfo-EMP2 pathway, a D-sulfoquinovose degradation pathway that produces sulfolactate (SL). Cleaves 6-deoxy-6-sulfo-D-fructose 1-phosphate (SFP) to form dihydroxyacetone phosphate (DHAP) and 3-sulfolactaldehyde (SLA). This Alkalicoccus urumqiensis (Bacillus urumqiensis) protein is Sulfofructosephosphate aldolase.